Reading from the N-terminus, the 428-residue chain is MRMVLTKIVCTIGPRTSSREKIKELIDAGMSIARLNFSHGSREAHLEVIRNIRDSRSGAGRHVSIALDTRGPEVRLRTPEMKDIKVEGGEVLRFSLLSSEKDIWIPGVDLKSLGVDNRVFIDDGAIELRVVNVEEDGFECEVLNSGMIKSNKSMNFPGTDIGDRALGDEDKNDIAFGLENGIDMVFASFVSCRADVEEIRRLVGSKVPVVSKIESCLGMRNLKEIALCSDGVMIARGDLGVEIGLENMFSAQKRILYEVKREGRPVICATQMMESMTLKNAPNRSEISDVGNAVLDGCDCVMLSAESAVGMFPVETVKFMRSICADAERYDMESRKGAGACGVSSYVDGVVICSGTESQIEKIYLSKPETPIIVISESLWILRRFSIYRGIIPVYGKGSEDAEATLRRLGLRGRFLAVGREDVRMVSV.

Substrate is bound at residue Arg34. Positions 36, 38, 68, and 69 each coordinate K(+). An ATP-binding site is contributed by 36–39; that stretch reads NFSH. Residues Arg75 and Lys152 each coordinate ATP. A Mg(2+)-binding site is contributed by Glu214. Residues Gly237, Asp238, and Thr270 each contribute to the substrate site. Asp238 provides a ligand contact to Mg(2+).

It belongs to the pyruvate kinase family. Homotetramer. Mg(2+) serves as cofactor. Requires K(+) as cofactor.

The catalysed reaction is pyruvate + ATP = phosphoenolpyruvate + ADP + H(+). It participates in carbohydrate degradation; glycolysis; pyruvate from D-glyceraldehyde 3-phosphate: step 5/5. The chain is Pyruvate kinase (PYK1) from Encephalitozoon cuniculi (strain GB-M1) (Microsporidian parasite).